Here is a 2141-residue protein sequence, read N- to C-terminus: MSETSSTSVSMIHRSFEGQGPPRHLSVMHPVVAKKISFYKSGDPQFGGVKVVVNPRSFKTFDALLDNLSRKVPLPFGVRNISTPRGRHSITRLEELEDGASYLCSHRRKVQPVDLDKARRRPRPWLSSRAISAHAQRSPPTSIGAAGAPGMLRAPRRLLVFRNGDPKIRRVVIVNRRVTQSFQAFLQHLTEVMRFPVTKLYATDGRKVPSLQAVILSSGAVVAAGREPFKPGNYDIQKYLLSARLPGTSHHVYIKGNTRSESRKMSTHVPSSPRSQIYSVSSGKMHNNDCYSDHSFASENYLALEKNDSRNLLIYPSEDDIEKSIIFNQDGTMTVEMKVRFKIKEEETIKWTTVSRASLSHNNEKCEVGCFPGRTDDQSSHLKIAACSLSADVSSLEKDNNQEVSLTEEINTRITDQETETCTSVSWENGAMDTNICTRVTQDQAKHHFYRPPTPGPKRVRQKSVRGSVTLVSETEVEEEMIRQFSYSEAREDGENKSEYHMFTHSCSKMSSVSNKPLLVQINNNEQMESSLERKKESRLLKSGAIRAGVEITNQKMLEMSHNNGSPQTISENSIVGEVIVDSLTSDNKTNIKILRPYSRTRDRFSPILADTTHSLSNDSGIDKTVSEIPALVESSTVTTRIDRLINEFAQCDLTNSANEKQTSLSVASKKKMKSQQQVINSRHQIRKIATKGILSKNKRINTGRRIAQEIILEGSDGSLKGGVVCEEDLHVSDTVIESNYCSQSDLNPVNSKNFHVNKLNTLQNPKKFQGLLAKRKSRPLTKVSLGGPTKREIGQGDKVFPHNDFRYCKNNFEDQNLFPMFNFLEQRPSDFCGPQGQAEIASWYLGGITKKNLVSKVNNSHITLKTQKKQKGDKLKSSTTVSKQQVTTRANSLGSLKKAVFPEAISHHSVQNYIQRWLQNTNPHSALQSRKSAPIYKKDRSVVSCNNNGFAGTKSHTSSGEGNNFARESNKYITKNASLTENLGKKVGKFFDKVNSEELSKDLCENQVESLNDACLLPLHENCALSQSAIDDHNTKIQVCAEKLGPEISLVYQEINVATKRHSVEAAIQVDLTEEDTSKDPLPILLLRQLQALVPSIHKTQNGITQMPGSLADIPFSSPICKSYTNVLLAWLLVLTLKGSINSFCQGDAHKTTNRASEILGLLEVLRHTAITEEADDLKAAVANLVESTTNHFGLTEKEQDMVPVGLSANCSTPNLHRVPKCVENEKTQKISSGGGHSASEHCGPEACVSELTCSCQMCIVNKTCPPKETCNLSDIFCPSDGCTVDQTPMNKACFQGEVCSLTDALSSHRACAHEENHSRKATCPIDEAYIPNKICNTSDFLIFKENTCTDNLELTEELERINKVQKDLNVLADPGCKHSFNILVSDQNISNLSYSSFPINETEPEFDKERSSVAELKNYSLKTFQGKNAYTSSDKEDSKTSEEPGSITNSMTSSERNISELESFEELENQDTDTFHMKVNAREQAAEELIQKELEASKNLQLIDGSRRNITEEEERNGIICEAIRRRLATPPSLVFCYDSKQNTEKDLNEGETKMRVKMMVKSVEIGSYSESSLDFKNDFIGPVTSDWSEFRPSSENEQPYKTSSDGPNGSCEEIVQDKDYNKGFVKRTIEKLYSKGEIIKPSFFSGSIHRSQVCPYNSVEFQCARKVDLYDCEGQSFGSSEQLSSNSSMLQKFLEEGQDKCDFNDVRANYHGGDILGHGTKQNDHNRIIRDIEEGVLIDKGKWLLKENHLLRISSPENSGLYGNADTISVDTLLNNDNEVPYSHFGNLAPDPTMAELSSSELEELSQPLELKCSYFNMPHCSDSEPFCEDLLDVQNKTCARERIPVHHAEEKANHKSERVCTSVTHGFTSAGNKVHPVSDDTIKNQPLPVNNAIHGALQEGDSLDKLYAICGQHCPILTVIIQPINEEDRGFAYCKNSDIENFLGLHLWMKVHPYLLPSNKTIFRDANNKANGRKAFIDNAFDDTFDLMDKRKLRNLKGISSLGLEEENNLKKFQLYLKKKFCVNFLHTSLLIVDNRNSDTRDSINQTNEIFEVVDENNNFLNSRFQNSRTNLNQVVRECSDFFFEMHGQTCLFYQVETSLNISNRNTVEIFYVFEDENLFIWEEESQFDLESNDEDL.

Positions 1–10 (MSETSSTSVS) are enriched in polar residues. The segment at 1-20 (MSETSSTSVSMIHRSFEGQG) is disordered. The Doublecortin 1 domain maps to 34–116 (KKISFYKSGD…RRKVQPVDLD (83 aa)). Positions 126-149 (LSSRAISAHAQRSPPTSIGAAGAP) are disordered. The 80-residue stretch at 156–235 (RRLLVFRNGD…REPFKPGNYD (80 aa)) folds into the Doublecortin 2 domain. Disordered regions lie at residues 259–278 (RSESRKMSTHVPSSPRSQIY), 1432–1458 (YTSSDKEDSKTSEEPGSITNSMTSSER), and 1589–1612 (DWSEFRPSSENEQPYKTSSDGPNG). Polar residues predominate over residues 268 to 278 (HVPSSPRSQIY). A compositionally biased stretch (basic and acidic residues) spans 1435–1444 (SDKEDSKTSE). Polar residues-rich tracts occupy residues 1448–1458 (SITNSMTSSER) and 1598–1610 (ENEQPYKTSSDGP).

Interacts (via the doublecortin domains) with microtubules. Interacts with RP1L1. Interacts with MAK.

The protein resides in the cytoplasm. It localises to the cytoskeleton. It is found in the cilium axoneme. The protein localises to the cell projection. Its subcellular location is the cilium. The protein resides in the photoreceptor outer segment. Its function is as follows. Microtubule-associated protein regulating the stability and length of the microtubule-based axoneme of photoreceptors. Required for the differentiation of photoreceptor cells, it plays a role in the organization of the outer segment of rod and cone photoreceptors ensuring the correct orientation and higher-order stacking of outer segment disks along the photoreceptor axoneme. The chain is Oxygen-regulated protein 1 (RP1) from Canis lupus familiaris (Dog).